A 498-amino-acid chain; its full sequence is Glycerol kinase (498 aa).

Thr-12 contacts ADP. Positions 12, 13, and 14 each coordinate ATP. Sn-glycerol 3-phosphate is bound at residue Thr-12. Residue Arg-16 participates in ADP binding. Sn-glycerol 3-phosphate contacts are provided by Arg-82, Glu-83, and Tyr-134. Arg-82, Glu-83, and Tyr-134 together coordinate glycerol. His-230 bears the Phosphohistidine; by HPr mark. Asp-244 provides a ligand contact to sn-glycerol 3-phosphate. The glycerol site is built by Asp-244 and Gln-245. ADP-binding residues include Thr-266 and Gly-309. 4 residues coordinate ATP: Thr-266, Gly-309, Gln-313, and Gly-410. ADP-binding residues include Gly-410 and Asn-414.

This sequence belongs to the FGGY kinase family. Homotetramer and homodimer (in equilibrium). The phosphoenolpyruvate-dependent sugar phosphotransferase system (PTS), including enzyme I, and histidine-containing protein (HPr) are required for the phosphorylation, which leads to the activation of the enzyme.

The catalysed reaction is glycerol + ATP = sn-glycerol 3-phosphate + ADP + H(+). It participates in polyol metabolism; glycerol degradation via glycerol kinase pathway; sn-glycerol 3-phosphate from glycerol: step 1/1. Its activity is regulated as follows. Activated by phosphorylation and inhibited by fructose 1,6-bisphosphate (FBP). Its function is as follows. Key enzyme in the regulation of glycerol uptake and metabolism. Catalyzes the phosphorylation of glycerol to yield sn-glycerol 3-phosphate. The sequence is that of Glycerol kinase from Staphylococcus aureus (strain MW2).